Consider the following 296-residue polypeptide: Bifunctional protein FolD (296 aa).

NADP(+) is bound by residues 166-168 (GRS), S195, and T236.

Belongs to the tetrahydrofolate dehydrogenase/cyclohydrolase family. In terms of assembly, homodimer.

It carries out the reaction (6R)-5,10-methylene-5,6,7,8-tetrahydrofolate + NADP(+) = (6R)-5,10-methenyltetrahydrofolate + NADPH. The enzyme catalyses (6R)-5,10-methenyltetrahydrofolate + H2O = (6R)-10-formyltetrahydrofolate + H(+). It functions in the pathway one-carbon metabolism; tetrahydrofolate interconversion. In terms of biological role, catalyzes the oxidation of 5,10-methylenetetrahydrofolate to 5,10-methenyltetrahydrofolate and then the hydrolysis of 5,10-methenyltetrahydrofolate to 10-formyltetrahydrofolate. This is Bifunctional protein FolD from Dehalococcoides mccartyi (strain ATCC BAA-2100 / JCM 16839 / KCTC 5957 / BAV1).